A 2406-amino-acid polypeptide reads, in one-letter code: Highly reducing polyketide synthase dmxL2 (2406 aa).

Residues 1–399 (MEAFWSASKK…GTNAHAVLDD (399 aa)) form the Ketosynthase family 3 (KS3) domain. The active site involves Cys-130. Cys-130 functions as the For beta-ketoacyl synthase activity in the catalytic mechanism. The tract at residues 414–476 (GHASNGTNGT…GPTDGPTSRP (63 aa)) is disordered. Polar residues predominate over residues 417-448 (SNGTNGTLTNGHILNGEHTSNGMNGTLTNGHA). The interval 574–911 (FVFTGQGAQW…LAGSLFTQGY (338 aa)) is malonyl-CoA:ACP transacylase (MAT) domain. Residue Ser-665 is the For malonyltransferase activity of the active site. Positions 962–1096 (PSLLGSPSPS…GLLVIEYEAA (135 aa)) are N-terminal hotdog fold. Residues 962 to 1278 (PSLLGSPSPS…CAEIAGASSN (317 aa)) enclose the PKS/mFAS DH domain. Residues 964–1273 (LLGSPSPSLA…IEGFLCAEIA (310 aa)) form a dehydratase (DH) domain region. Catalysis depends on His-994, which acts as the Proton acceptor; for dehydratase activity. The tract at residues 1124 to 1278 (VHRLDPSGFY…CAEIAGASSN (155 aa)) is C-terminal hotdog fold. Asp-1189 (proton donor; for dehydratase activity) is an active-site residue. The tract at residues 1694 to 2006 (GMLGSVCLEP…TGKHLGKIAL (313 aa)) is enoylreductase (ER) domain. Positions 2032 to 2210 (GVYLLVGGLG…TTVDLGIMRD (179 aa)) are ketoreductase (KR) domain. The Carrier domain maps to 2318–2395 (EASDSVLEAL…TFCNRIAAKS (78 aa)). Ser-2355 bears the O-(pantetheine 4'-phosphoryl)serine mark.

The protein operates within secondary metabolite biosynthesis. Its function is as follows. Highly reducing polyketide synthase; part of the gene cluster that mediates the biosynthesis of the dimeric xanthones cryptosporioptides. The pathway begins with the synthesis of atrochrysone thioester by the polyketide synthase dmx-nrPKS. The atrochrysone carboxyl ACP thioesterase dmxR1 then breaks the thioester bond and releases the atrochrysone carboxylic acid from dmx-nrPKS. Atrochrysone carboxylic acid is decarboxylated by the decarboxylase dmxR15, and oxidized by the anthrone oxygenase dmxR16 to yield emodin. Emodin is then reduced to emodin hydroquinone by the oxidoreductase dmxR7. A-ring reduction by the short chain dehydrogenase dmxR18, dehydration by the scytalone dehydratase-like protein dmxR17 and probable spontaneous re-oxidation, results in overall deoxygenation to chrysophanol. Baeyer-Villiger oxidation by the Baeyer-Villiger monooxygenase (BVMO) dmxR6 then yields monodictylactone in equilibrium with monodictyphenone. In the case of the cryptosporioptides biosynthesis, monodictylactone is reduced at C-12 to an alcohol (by the short chain dehydrogenases dmxR12 or dmxR8) and hydroxylated at C-5 by dmxR9, yielding the electron-rich aromatic which could eliminate H(2)O to form the ortho-quinonemethide, followed by tautomerisation to paraquinone and complete the formal reduction to produce the 10-methylgroup. Conjugate addition of C-4a-OH to the resulting paraquinone by the monooxygenase dmxR10 then gives cyclohexadienone, which is then reduced at C-5 by the short chain dehydrogenase dmxR3 to give the dihydroxanthone. The 6,7-epoxide in the cryptosporioptides could be introduced by the cytochrome P450 monooxygenase dmxL3. The highly reducing PKS dmxL2 manufactures butyrate, which is further carboxylated by dmxL1 to form ethylmalonate. It is not yet clear whether the carboxylation occurs while the butyrate is attached to the ACP of dmxL2, but this unusual fungal metabolite could then be esterified to O-5 by the O-acetyltransferase dmxR13. Finally, dimerization performed by dmxR5 gives the observed dimers cryptosporioptides A, B and C as the final products of the pathway. The protein is Highly reducing polyketide synthase dmxL2 of Cryptosporiopsis sp. (strain 8999).